Here is a 90-residue protein sequence, read N- to C-terminus: Conotoxin Rg9.1 (90 aa).

The first 20 residues, 1 to 20 (MHLSLARSAVLILLLLFALG), serve as a signal peptide directing secretion. Positions 21-60 (NFVGVQPGQITRDADHGINLRSLRKQMSRSPLVKGAFCGQ) are excised as a propeptide. 3 cysteine pairs are disulfide-bonded: cysteine 58-cysteine 71, cysteine 62-cysteine 73, and cysteine 67-cysteine 80.

It belongs to the conotoxin P superfamily. As to expression, expressed by the venom duct.

The protein localises to the secreted. In terms of biological role, probable neurotoxin that inhibits ion channels. The polypeptide is Conotoxin Rg9.1 (Conus regius (Crown cone)).